The chain runs to 43 residues: Oxygen-evolving enhancer protein 2 (43 aa).

It belongs to the PsbP family.

It is found in the plastid. Its subcellular location is the chloroplast thylakoid membrane. In terms of biological role, may be involved in the regulation of photosystem II. This Physcomitrium patens (Spreading-leaved earth moss) protein is Oxygen-evolving enhancer protein 2.